The following is a 202-amino-acid chain: Large ribosomal subunit protein uL13 (202 aa).

It belongs to the universal ribosomal protein uL13 family. Component of the large ribosomal subunit (LSU). Mature N.crassa ribosomes consist of a small (40S) and a large (60S) subunit. The 40S small subunit contains 1 molecule of ribosomal RNA (18S rRNA) and at least 32 different proteins. The large 60S subunit contains 3 rRNA molecules (26S, 5.8S and 5S rRNA) and at least 42 different proteins.

Its subcellular location is the cytoplasm. In terms of biological role, component of the ribosome, a large ribonucleoprotein complex responsible for the synthesis of proteins in the cell. The small ribosomal subunit (SSU) binds messenger RNAs (mRNAs) and translates the encoded message by selecting cognate aminoacyl-transfer RNA (tRNA) molecules. The large subunit (LSU) contains the ribosomal catalytic site termed the peptidyl transferase center (PTC), which catalyzes the formation of peptide bonds, thereby polymerizing the amino acids delivered by tRNAs into a polypeptide chain. The nascent polypeptides leave the ribosome through a tunnel in the LSU and interact with protein factors that function in enzymatic processing, targeting, and the membrane insertion of nascent chains at the exit of the ribosomal tunnel. This is Large ribosomal subunit protein uL13 (crp-46) from Neurospora crassa (strain ATCC 24698 / 74-OR23-1A / CBS 708.71 / DSM 1257 / FGSC 987).